The following is a 949-amino-acid chain: Lon protease homolog, mitochondrial (949 aa).

The N-terminal 65 residues, 1–65, are a transit peptide targeting the mitochondrion; it reads MAASTGYVRL…VLPGGVQWRG (65 aa). Disordered regions lie at residues 68–94 and 213–240; these read DSGN…TGEG and EGLE…DELG. A Lon N-terminal domain is found at 112-359; sequence LPLIAITRNP…KALSLLKKEF (248 aa). The segment covering 223–232 has biased composition (basic residues); sequence KSRRKLKRGK. Position 512–519 (512–519) interacts with ATP; that stretch reads GPPGVGKT. Residues 748–938 enclose the Lon proteolytic domain; sequence VTPPGVVMGL…RDIFPIAFPR (191 aa). Active-site residues include Ser-844 and Lys-887.

This sequence belongs to the peptidase S16 family. Homohexamer. Organized in a ring with a central cavity. The ATP-binding and proteolytic domains (AP-domain) form a hexameric chamber, while the N-terminal domain is arranged as a trimer of dimers. DNA and RNA binding is stimulated by substrate and inhibited by ATP binding. Interacts with TWNK and mitochondrial DNA polymerase subunit POLG. Detected in liver &gt; heart &gt; kidney &gt; testis.

The protein resides in the mitochondrion matrix. It catalyses the reaction Hydrolysis of proteins in presence of ATP.. In terms of biological role, ATP-dependent serine protease that mediates the selective degradation of misfolded, unassembled or oxidatively damaged polypeptides as well as certain short-lived regulatory proteins in the mitochondrial matrix. Endogenous substrates include mitochondrial steroidogenic acute regulatory (StAR) protein, DELE1, helicase Twinkle (TWNK) and the large ribosomal subunit protein MRPL32/bL32m. MRPL32/bL32m is protected from degradation by LONP1 when it is bound to a nucleic acid (RNA), but TWNK is not. May also have a chaperone function in the assembly of inner membrane protein complexes. Participates in the regulation of mitochondrial gene expression and in the maintenance of the integrity of the mitochondrial genome. Binds to mitochondrial promoters and RNA in a single-stranded, site-specific, and strand-specific manner. May regulate mitochondrial DNA replication and/or gene expression using site-specific, single-stranded DNA binding to target the degradation of regulatory proteins binding to adjacent sites in mitochondrial promoters. The polypeptide is Lon protease homolog, mitochondrial (Lonp1) (Mus musculus (Mouse)).